Consider the following 414-residue polypeptide: Voltage-gated ClC-type chloride channel ClcB (414 aa).

Helical transmembrane passes span leucine 5–alanine 25, alanine 54–tyrosine 74, serine 116–alanine 136, leucine 147–glycine 167, leucine 169–isoleucine 189, valine 220–leucine 240, leucine 255–phenylalanine 275, threonine 292–alanine 312, leucine 327–leucine 347, leucine 353–methionine 373, and methionine 381–isoleucine 401.

It belongs to the chloride channel (TC 2.A.49) family. ClcB subfamily.

The protein resides in the cell inner membrane. Its function is as follows. Probably acts as an electrical shunt for an outwardly-directed proton pump that is linked to amino acid decarboxylation, as part of the extreme acid resistance (XAR) response. The chain is Voltage-gated ClC-type chloride channel ClcB from Yersinia pseudotuberculosis serotype O:1b (strain IP 31758).